Reading from the N-terminus, the 105-residue chain is Large ribosomal subunit protein eL42 (105 aa).

Residues 28-57 (YKKGKDSLAAQGKRRYDRKQSGYGGQTKPV) are disordered.

Belongs to the eukaryotic ribosomal protein eL42 family.

This is Large ribosomal subunit protein eL42 (RPL44) from Gossypium hirsutum (Upland cotton).